A 98-amino-acid polypeptide reads, in one-letter code: HIG1 domain family member 1B (98 aa).

Residues 1–28 (MSANKGWWVPPEGEDNLSKKFLRKTRES) are Cytoplasmic-facing. An HIG1 domain is found at 1–94 (MSANKGWWVP…YRDYIKRVSE (94 aa)). The chain crosses the membrane as a helical span at residues 29–46 (PLVPIGVAGCLVIAAYRI). Topologically, residues 47-60 (YRLKARGSTKLSIH) are extracellular. The helical transmembrane segment at 61 to 83 (LIHTRVAAQACAVGAIMLGAMYT) threads the bilayer. The Cytoplasmic segment spans residues 84–98 (MYRDYIKRVSEDAEK).

It is found in the membrane. The protein is HIG1 domain family member 1B (Higd1b) of Mus musculus (Mouse).